A 488-amino-acid polypeptide reads, in one-letter code: Protein unzipped (488 aa).

The signal sequence occupies residues 1 to 21 (MTSNSCLISLGLLLVLIQILA). At 22 to 465 (PAKAAEHSVF…DVALAGFGVN (444 aa)) the chain is on the extracellular side. Residues Asn-35, Asn-232, Asn-317, and Asn-374 are each glycosylated (N-linked (GlcNAc...) asparagine). Low complexity predominate over residues 380–400 (TTTTTTTTSTSTTTHATTTST). Residues 380 to 453 (TTTTTTTTST…EAPENMSSDP (74 aa)) form a disordered region. Asn-448 carries an N-linked (GlcNAc...) asparagine glycan. Residues 466–486 (AAGSTFIAGSALLTLLLTIFL) traverse the membrane as a helical segment. The Cytoplasmic segment spans residues 487–488 (SL).

The protein resides in the membrane. Its function is as follows. Required for normal axon patterning during neurogenesis. This is Protein unzipped (uzip) from Drosophila melanogaster (Fruit fly).